The chain runs to 729 residues: MPKNSKVVKRDLDDDVIESVKDLLSNEDSVEDVSKKSELIVDVQEEKDTDAEDGSEVDDERPAWNSKLQYILAQVGFSVGLGNVWRFPYLCQKNGGGAYLLPYLILLLVIGIPLFFLELSVGQRIRRGSIGVWNYISPKLGGIGFASCVVCYFVALYYNVIIGWTLFYFSQSFQQPLPWDQCPLVKNASHTYIEPECEKSSATTYYWYREALAISSSISESGGLNWKMTGCLLAAWVMVCLAMIKGIQSSGKIMYFSSLFPYVVLICFLIRSLLLNGSIDGIRHMFTPKLEMMLEPKVWREAATQVFFALGLGFGGVIAFSSYNKRDNNCHFDAVLVSFINFFTSVLATLVVFAVLGFKANIVNEKCISQNSEMILKLLKTGNVSWDVIPRHINLSAVTAEDYHVVYDIIQKVKEEEFAVLHLKACQIEDELNKAVQGTGLAFIAFTEAMTHFPASPFWSVMFFLMLINLGLGSMFGTIEGIITPVVDTFKVRKEILTVICCLLAFCIGLMFVQRSGNYFVTMFDDYSATLPLLIVVILENIAVSFVYGIDKFLEDLTDMLGFAPSKYYYYMWKYISPLMLVTLLIASIVNMGLSPPGYNAWIKEKASEEFLSYPMWGMVVCFSLMVLAILPVPVVFVIRRCNLIDDSSGNLASVTYKRGRVLKEPVNLDGDDASLIHGKIPSEMSSPNFGKNIYRKQSGSPTLDTAPNGRYGIGYLMADMPDMPESDL.

Topologically, residues 1–69 are cytoplasmic; the sequence is MPKNSKVVKR…ERPAWNSKLQ (69 aa). Residues S25 and S55 each carry the phosphoserine modification. A run of 3 helical transmembrane segments spans residues 70–90, 98–117, and 142–162; these read YILA…FPYL, AYLL…LFFL, and GIGF…NVII. Topologically, residues 163-225 are extracellular; that stretch reads GWTLFYFSQS…SSISESGGLN (63 aa). The N-linked (GlcNAc...) asparagine glycan is linked to N187. 4 helical membrane passes run 226-244, 253-270, 306-323, and 335-356; these read WKMT…LAMI, IMYF…CFLI, VFFA…FSSY, and VLVS…FAVL. Residues 357 to 452 lie on the Extracellular side of the membrane; sequence GFKANIVNEK…FIAFTEAMTH (96 aa). N-linked (GlcNAc...) asparagine glycans are attached at residues N383 and N394. Transmembrane regions (helical) follow at residues 453 to 472, 496 to 514, 530 to 550, 571 to 592, and 620 to 642; these read FPAS…NLGL, ILTV…MFVQ, TLPL…VYGI, YMWK…IVNM, and VVCF…IRRC. The Cytoplasmic segment spans residues 643–729; it reads NLIDDSSGNL…DMPDMPESDL (87 aa). 3 positions are modified to phosphoserine: S687, S699, and S701.

The protein belongs to the sodium:neurotransmitter symporter (SNF) (TC 2.A.22) family. SLC6A15 subfamily. In terms of tissue distribution, widely distributed in the central nervous system, including the olfactory bulb, the hypothalamus, the cerebral cortex, the hippocampus, and the cerebellum. In addition, intense expression is found in the motor nuclei including the oculomotor nucleus, abducens nucleus, trigeminal motor nucleus, facial nucleus, hypoglossal nucleus and ventral horn of spinal cord. Intense hybridization signals are also observed in the nuclei containing monoaminergic neurons, such as locus coeruleus, the substantia nigra pars compacta, the ventral tegmental area, the dorsal raphe nucleus and the median raphe nucleus.

It localises to the membrane. The catalysed reaction is L-leucine(in) + Na(+)(in) = L-leucine(out) + Na(+)(out). The enzyme catalyses L-isoleucine(in) + Na(+)(in) = L-isoleucine(out) + Na(+)(out). It catalyses the reaction L-methionine(in) + Na(+)(in) = L-methionine(out) + Na(+)(out). It carries out the reaction L-proline(in) + Na(+)(in) = L-proline(out) + Na(+)(out). The catalysed reaction is L-alanine(in) + Na(+)(in) = L-alanine(out) + Na(+)(out). The enzyme catalyses L-asparagine(in) + Na(+)(in) = L-asparagine(out) + Na(+)(out). It catalyses the reaction L-valine(in) + Na(+)(in) = L-valine(out) + Na(+)(out). It carries out the reaction L-cysteine(in) + Na(+)(in) = L-cysteine(out) + Na(+)(out). The catalysed reaction is L-glutamine(in) + Na(+)(in) = L-glutamine(out) + Na(+)(out). The enzyme catalyses L-serine(in) + Na(+)(in) = L-serine(out) + Na(+)(out). It catalyses the reaction L-threonine(in) + Na(+)(in) = L-threonine(out) + Na(+)(out). It carries out the reaction L-pipecolate(in) + Na(+)(in) = L-pipecolate(out) + Na(+)(out). The catalysed reaction is L-phenylalanine(in) + Na(+)(in) = L-phenylalanine(out) + Na(+)(out). Functionally, functions as a sodium-dependent neutral amino acid transporter. Exhibits preference for the branched-chain amino acids, particularly leucine, valine and isoleucine and methionine. Can also transport low-affinity substrates such as alanine, phenylalanine, glutamine and pipecolic acid. Mediates the saturable, pH-sensitive and electrogenic cotransport of proline and sodium ions with a stoichiometry of 1:1. May have a role as transporter for neurotransmitter precursors into neurons. In contrast to other members of the neurotransmitter transporter family, does not appear to be chloride-dependent. The polypeptide is Sodium-dependent neutral amino acid transporter B(0)AT2 (Slc6a15) (Rattus norvegicus (Rat)).